A 698-amino-acid polypeptide reads, in one-letter code: Elongation factor G 1 (698 aa).

The 283-residue stretch at 8-290 (ERYRNIGICA…AVVEFLPAPV (283 aa)) folds into the tr-type G domain. GTP contacts are provided by residues 17–24 (AHVDAGKT), 88–92 (DTPGH), and 142–145 (NKMD).

Belongs to the TRAFAC class translation factor GTPase superfamily. Classic translation factor GTPase family. EF-G/EF-2 subfamily.

Its subcellular location is the cytoplasm. Functionally, catalyzes the GTP-dependent ribosomal translocation step during translation elongation. During this step, the ribosome changes from the pre-translocational (PRE) to the post-translocational (POST) state as the newly formed A-site-bound peptidyl-tRNA and P-site-bound deacylated tRNA move to the P and E sites, respectively. Catalyzes the coordinated movement of the two tRNA molecules, the mRNA and conformational changes in the ribosome. In Shewanella sp. (strain MR-4), this protein is Elongation factor G 1.